The chain runs to 176 residues: Cytochrome b (176 aa).

A run of 3 helical transmembrane segments spans residues 33-53 (FGSL…FLAM), 77-98 (WLLR…YLHV), and 113-133 (WNVG…GYVL). The heme b site is built by histidine 83 and histidine 97.

It belongs to the cytochrome b family. The cytochrome bc1 complex contains 11 subunits: 3 respiratory subunits (MT-CYB, CYC1 and UQCRFS1), 2 core proteins (UQCRC1 and UQCRC2) and 6 low-molecular weight proteins (UQCRH/QCR6, UQCRB/QCR7, UQCRQ/QCR8, UQCR10/QCR9, UQCR11/QCR10 and a cleavage product of UQCRFS1). This cytochrome bc1 complex then forms a dimer. Requires heme b as cofactor.

Its subcellular location is the mitochondrion inner membrane. In terms of biological role, component of the ubiquinol-cytochrome c reductase complex (complex III or cytochrome b-c1 complex) that is part of the mitochondrial respiratory chain. The b-c1 complex mediates electron transfer from ubiquinol to cytochrome c. Contributes to the generation of a proton gradient across the mitochondrial membrane that is then used for ATP synthesis. This chain is Cytochrome b (MT-CYB), found in Mormopterus kalinowskii (Kalinowski's mastiff bat).